The chain runs to 477 residues: Glutamate--tRNA ligase 1 (477 aa).

The 'HIGH' region motif lies at 12-22 (PSPTGALHLGN). The short motif at 253 to 257 (PLSKR) is the 'KMSKS' region element. Lysine 256 is an ATP binding site.

Belongs to the class-I aminoacyl-tRNA synthetase family. Glutamate--tRNA ligase type 1 subfamily. As to quaternary structure, monomer.

It is found in the cytoplasm. It catalyses the reaction tRNA(Glu) + L-glutamate + ATP = L-glutamyl-tRNA(Glu) + AMP + diphosphate. Functionally, catalyzes the attachment of glutamate to tRNA(Glu) in a two-step reaction: glutamate is first activated by ATP to form Glu-AMP and then transferred to the acceptor end of tRNA(Glu). This Halorhodospira halophila (strain DSM 244 / SL1) (Ectothiorhodospira halophila (strain DSM 244 / SL1)) protein is Glutamate--tRNA ligase 1.